We begin with the raw amino-acid sequence, 115 residues long: Succinate dehydrogenase assembly factor 3, mitochondrial (115 aa).

Belongs to the complex I LYR family. SDHAF3 subfamily. Interacts with sdh2 within an sdh1-sdh2 subcomplex.

It localises to the mitochondrion matrix. Its function is as follows. Plays an essential role in the assembly of succinate dehydrogenase (SDH), an enzyme complex (also referred to as respiratory complex II) that is a component of both the tricarboxylic acid (TCA) cycle and the mitochondrial electron transport chain, and which couples the oxidation of succinate to fumarate with the reduction of ubiquinone (coenzyme Q) to ubiquinol. Promotes maturation of the iron-sulfur protein subunit sdh2 of the SDH catalytic dimer, protecting it from the deleterious effects of oxidants. May act together with SDHAF1. The polypeptide is Succinate dehydrogenase assembly factor 3, mitochondrial (Schizosaccharomyces pombe (strain 972 / ATCC 24843) (Fission yeast)).